The primary structure comprises 162 residues: MDETTKSSLKAIPLCKTKAGPRDGDLWMERLKAKYEAIIAAVQNNKTSDRDWFKLEANERGTKWFGKCWYFHNMVKYEFDVEFDIPITYPVTAPEIALPELDGKTAKMYRGGKICLSEHFKPLWARNTPKFGIAHAFALGLGPWMAVEIPDLIEKGIIQPKA.

The active-site Glycyl thioester intermediate is cysteine 115.

Belongs to the ubiquitin-conjugating enzyme family. UFC1 subfamily. In terms of assembly, interacts with uba-5.

E2-like enzyme which forms an intermediate with ufm-1. The intermediate is formed via a thioester linkage. The protein is Ubiquitin-fold modifier-conjugating enzyme 1 of Caenorhabditis briggsae.